The primary structure comprises 239 residues: Ribose-5-phosphate isomerase A (239 aa).

Substrate-binding positions include 31-34 (FGST), 88-91 (DGAD), and 101-104 (KGGG). The active-site Proton acceptor is Glu-110. Lys-128 is a binding site for substrate.

This sequence belongs to the ribose 5-phosphate isomerase family. Homodimer.

It catalyses the reaction aldehydo-D-ribose 5-phosphate = D-ribulose 5-phosphate. It functions in the pathway carbohydrate degradation; pentose phosphate pathway; D-ribose 5-phosphate from D-ribulose 5-phosphate (non-oxidative stage): step 1/1. Its function is as follows. Catalyzes the reversible conversion of ribose-5-phosphate to ribulose 5-phosphate. The chain is Ribose-5-phosphate isomerase A from Chloroflexus aurantiacus (strain ATCC 29366 / DSM 635 / J-10-fl).